The primary structure comprises 836 residues: Transcriptional regulatory protein UME6 (836 aa).

Over residues 1-14 (MLDKARSQSKHMDE) the composition is skewed to basic and acidic residues. Disordered stretches follow at residues 1–77 (MLDK…IESL), 92–168 (STCA…CNGH), 218–332 (HLPP…DDQC), and 381–464 (NESS…GFFY). Polar residues-rich tracts occupy residues 39–48 (SRATLMNSSQ), 61–77 (GANS…IESL), and 92–112 (STCA…SLKV). A Phosphoserine modification is found at Ser114. Basic and acidic residues predominate over residues 117–126 (DIKDDPKEND). Ser141, Ser150, and Ser228 each carry phosphoserine. Residues 226 to 236 (AVSSPGTTAAG) are compositionally biased toward low complexity. The span at 258–272 (TSANKNNGKTTNSPM) shows a compositional bias: polar residues. Positions 273 to 305 (SILSRNNSTNNNDNNSIQSSDSRESSNNNEIGG) are enriched in low complexity. 2 positions are modified to phosphoserine: Ser316 and Ser318. The span at 316 to 325 (SPSNDSQVQH) shows a compositional bias: polar residues. The span at 381-398 (NESSSNNASSNTDTPTNS) shows a compositional bias: low complexity. A compositionally biased stretch (polar residues) spans 399 to 414 (RHANTSSSITSRNNFQ). Residues 426 to 446 (PTSASSFTSTNNNNPQRNNIN) show a composition bias toward low complexity. Residues 508–594 (NSASSSTKLD…QPIFESNNST (87 aa)) form an SIN3-binding region. Residues 636–766 (NGKRIDRRLS…ATSSTSQGTR (131 aa)) are disordered. A Phosphoserine modification is found at Ser645. Polar residues predominate over residues 670–679 (VASQTNSDYN). A compositionally biased stretch (low complexity) spans 680 to 702 (SLGESSTSSAPSSPSLKASSGLA). Residues 718 to 739 (SKGKNVKPKAKSKAKQSSKKRP) are compositionally biased toward basic residues. Low complexity predominate over residues 740-751 (NNTTSKSKANNS). The zn(2)-C6 fungal-type DNA-binding region spans 771–798 (CWICRLRKKKCTEERPHCFNCERLKLDC).

In terms of assembly, component of the RPD3C(L) complex composed of at least ASH1, CTI6, DEP1, PHO23, RPD3, RXT2, RXT3, SAP30, SDS3, SIN3, UME1 and UME6. Interacts with RIM11, MCK1 and IME1. Post-translationally, phosphorylated by RIM11 and MCK1.

It localises to the nucleus. Its function is as follows. Component of the RPD3C(L) histone deacetylase complex (HDAC) responsible for the deacetylation of lysine residues on the N-terminal part of the core histones (H2A, H2B, H3 and H4). Histone deacetylation gives a tag for epigenetic repression and plays an important role in transcriptional regulation, cell cycle progression and developmental events. Binds to the URS1 site (5'-AGCCGCCGA-3') and recruits the RPD3 histone deacetylase complex to the promoters to negatively regulate the expression of many genes including CAR1 (arginase), several required for sporulation, mating type switching, inositol metabolism, and oxidative carbon metabolism. Also recruits the ISW2 chromatin remodeling complex to promoters in a second gene repression pathway. Associates with the master regulator of meiosis IME1 in order to activate the expression of meiosis genes. Has both a positive and negative role in regulating phospholipid biosynthesis. The polypeptide is Transcriptional regulatory protein UME6 (UME6) (Saccharomyces cerevisiae (strain ATCC 204508 / S288c) (Baker's yeast)).